The sequence spans 231 residues: MPLAPPANSVETMASLMPLSPYLSPTVLLLVSCDLGFVRADRPPSPVNVTVTHLRANSATVSWDVPEGNIVIGYSISQQRQNGPGQRVIREVNTTTRACALWGLAEDSDYTVQVRSIGLRGESPPGPRVHFRTLKGSDRLPSNSSSPGDITVEGLDGERPLQTGEVVIIVVVLLMWAAVIGLFCRQYDIIKDNDSNNNPKEKGKGPEQSPQGRPVGTTRQKKSPSINTIDV.

Positions 1-40 are cleaved as a signal peptide; it reads MPLAPPANSVETMASLMPLSPYLSPTVLLLVSCDLGFVRA. The Extracellular portion of the chain corresponds to 41-163; it reads DRPPSPVNVT…GLDGERPLQT (123 aa). Residues 43-136 form the Fibronectin type-III domain; it reads PPSPVNVTVT…PRVHFRTLKG (94 aa). N-linked (GlcNAc...) asparagine glycans are attached at residues Asn-48 and Asn-143. The disordered stretch occupies residues 118–156; that stretch reads GLRGESPPGPRVHFRTLKGSDRLPSNSSSPGDITVEGLD. The helical transmembrane segment at 164–184 threads the bilayer; sequence GEVVIIVVVLLMWAAVIGLFC. The Cytoplasmic portion of the chain corresponds to 185–231; that stretch reads RQYDIIKDNDSNNNPKEKGKGPEQSPQGRPVGTTRQKKSPSINTIDV. Over residues 193-205 the composition is skewed to basic and acidic residues; that stretch reads NDSNNNPKEKGKG. The tract at residues 193–231 is disordered; the sequence is NDSNNNPKEKGKGPEQSPQGRPVGTTRQKKSPSINTIDV.

Predominantly expressed in the liver and in the brain, including in the cortex, hypothalamus and hippocampus. Also expressed in heart, lung, kidney and testis. In the colon, expressed in the epithelium and in a subset of immune cells in lymphoid aggregates.

Its subcellular location is the membrane. The protein localises to the secreted. In terms of biological role, has anti-inflammatory properties. In the colon, acts on macrophages to down-regulate inflammation. May suppress osteoclastogenesis and mature osteoclast resorptive function. In white adipose tissue, decreases local inflammation, via interaction with GPR116. Also required for proper systemic glucose tolerance, specifically sensitizing white adipocytes to insulin and promoting glucose uptake. The insulin sensitizing function in adipose tissue is mediated by interaction with ADGRF5/GPR116 and activation of cAMP signaling. This chain is Fibronectin type III domain-containing protein 4 (Fndc4), found in Mus musculus (Mouse).